Consider the following 763-residue polypeptide: Phosphoglycerol transferase I (763 aa).

The next 4 membrane-spanning stretches (helical) occupy residues 1 to 21 (MSELLSFALFLASVLIYAWKA), 26 to 46 (WWFAATLTVLGLFVVLNITLF), 77 to 97 (ILPGIGIVLGLTAVFGALGWI), and 108 to 128 (FGYSLLALLLALGSVDASPAF).

It belongs to the OpgB family.

The protein resides in the cell inner membrane. It carries out the reaction a phosphatidylglycerol + a membrane-derived-oligosaccharide D-glucose = a 1,2-diacyl-sn-glycerol + a membrane-derived-oligosaccharide 6-(glycerophospho)-D-glucose.. Its pathway is glycan metabolism; osmoregulated periplasmic glucan (OPG) biosynthesis. Transfers a phosphoglycerol residue from phosphatidylglycerol to the membrane-bound nascent glucan backbones. This is Phosphoglycerol transferase I from Shigella boydii serotype 18 (strain CDC 3083-94 / BS512).